We begin with the raw amino-acid sequence, 453 residues long: Oocyte zinc finger protein XlCOF6 (453 aa).

14 consecutive C2H2-type zinc fingers follow at residues 6–29 (FICS…CGKH), 67–89 (FTCT…HKTH), 95–117 (FTCM…YKAH), 123–145 (VRCT…KRLH), 151–173 (FTCT…HKTH), 179–201 (FACT…QRTH), 207–229 (FTCT…RRTH), 235–257 (FTCT…HKTH), 263–285 (FTCT…QITH), 291–313 (FTCT…HKTH), 319–341 (FACT…QRTH), 375–397 (FTCT…HKTH), 403–425 (FTCT…QRTH), and 431–453 (FTCT…RITH).

Belongs to the krueppel C2H2-type zinc-finger protein family.

It localises to the nucleus. Functionally, may be involved in transcriptional regulation. In Xenopus laevis (African clawed frog), this protein is Oocyte zinc finger protein XlCOF6.